We begin with the raw amino-acid sequence, 134 residues long: Transcription antitermination protein NusB (134 aa).

The protein belongs to the NusB family.

Functionally, involved in transcription antitermination. Required for transcription of ribosomal RNA (rRNA) genes. Binds specifically to the boxA antiterminator sequence of the ribosomal RNA (rrn) operons. This Shewanella woodyi (strain ATCC 51908 / MS32) protein is Transcription antitermination protein NusB.